The following is a 528-amino-acid chain: Major facilitator superfamily multidrug transporter mdr3 (528 aa).

Positions M1–V37 are disordered. 7 consecutive transmembrane segments (helical) span residues F50 to I70, W91 to G111, I119 to F139, A149 to G169, M180 to G200, W211 to I231, and A241 to L261. The N-linked (GlcNAc...) asparagine glycan is linked to N262. Transmembrane regions (helical) follow at residues G272–F292, V340–L360, F375–I395, S410–V430, and A448–V468.

This sequence belongs to the major facilitator superfamily.

The protein localises to the cell membrane. Major facilitator superfamily transporter that confers resistance to azoles such as itraconazole. The sequence is that of Major facilitator superfamily multidrug transporter mdr3 from Aspergillus fumigatus (strain ATCC MYA-4609 / CBS 101355 / FGSC A1100 / Af293) (Neosartorya fumigata).